The sequence spans 244 residues: Lactate utilization protein A (244 aa).

Belongs to the LutA/YkgE family.

Functionally, is involved in L-lactate degradation and allows cells to grow with lactate as the sole carbon source. The chain is Lactate utilization protein A from Oceanobacillus iheyensis (strain DSM 14371 / CIP 107618 / JCM 11309 / KCTC 3954 / HTE831).